The sequence spans 701 residues: METKNSEDQGKPQRKSVSSLWKSKHGPAEMRPELPPETAKETQNEEPRCLIPIQRNSLFNRAMRHKHKARSMSERRANDQAGDLPETRKSVNEPLAFNLPQGRLPPWRTPAQRGPGAQEASESSSTPGNGTTPEECPALTDSPTTLTEALQMIHPIPADSWRNLIEQIGLLYQEYRDKSTLQEIETRRQQDAEIQGNSDGSQAGEDNAEEEEEEEEEPASPPERRALPQICLLSNPHSRFNLWQDLPEIQSSGVLDILQPEETKLQEAMFELVTSEASYYKSLNLLVSHFMENERLKKILHPSEAHILFSNVLDVMAVSERFLLELEHRMEENIVISDVCDIVYRYAADHFSVYITYVSNQTYQERTYKQLLQEKTAFRELIAQLELDPKCKGLPLSSFLILPFQRITRLKLLVQNILKRVEEGSEREGTALDAHKELEMVVKACNEGVRKMSRTEQMISIQKKMEFKIKSVPIISHSRWLLKQGELQQMSGPKTSRTLRTKKLFREIYLFLFNDLLVICRQIPGDKYQVFDSAPRGLLRVEELEDQGQTLANVFILRLLENADDREATYMLKASSQSEMKRWMTSLAPNRRTKFVSFTSRLLDCPQVQCVHPYVAQQPDELTLELADILNILEKTEDGWIFGERLHDQERGWFPSSMTEEILNPKIRSQNLKECFRVHKMEDPQRSQNKDRRKLGSRNRQ.

2 stretches are compositionally biased toward basic and acidic residues: residues 1–11 and 26–48; these read METKNSEDQGK and GPAEMRPELPPETAKETQNEEPR. The disordered stretch occupies residues 1–141; sequence METKNSEDQG…TPEECPALTD (141 aa). Residues 1–264 are regulatory region; modulates activity toward RHOA, RAC1 and CDC42; sequence METKNSEDQG…LDILQPEETK (264 aa). Residues 120-132 show a composition bias toward polar residues; sequence ASESSSTPGNGTT. Tyr172 is subject to Phosphotyrosine. A disordered region spans residues 187-226; the sequence is RRQQDAEIQGNSDGSQAGEDNAEEEEEEEEEPASPPERRA. The segment covering 206-218 has biased composition (acidic residues); sequence DNAEEEEEEEEEP. The DH domain maps to 264-448; sequence KLQEAMFELV…EMVVKACNEG (185 aa). The PH domain maps to 480–592; that stretch reads WLLKQGELQQ…WMTSLAPNRR (113 aa). Residues 603-664 form the SH3 domain; that stretch reads LDCPQVQCVH…PSSMTEEILN (62 aa). Residues 679–690 are compositionally biased toward basic and acidic residues; the sequence is HKMEDPQRSQNK. Residues 679–701 are disordered; it reads HKMEDPQRSQNKDRRKLGSRNRQ. The span at 691 to 701 shows a compositional bias: basic residues; it reads DRRKLGSRNRQ.

Interacts with CDK5R1 and EPHA4; activated by EPHA4 through the CDK5 kinase. Post-translationally, phosphorylation by CDK5 upon EPHA4 activation by EFNA1 may regulate dendritic spine morphogenesis. Src-dependent phosphorylation at Tyr-172 upon EPHA4 activation increases the guanine exchange factor activity toward RHOA. As to expression, expressed in telencephalic neurons (at protein level). Expressed in brain, spinal cord and testis.

It is found in the cytoplasm. The protein resides in the membrane. The protein localises to the cell projection. Its subcellular location is the growth cone. Its function is as follows. Acts as a guanine nucleotide exchange factor (GEF) which differentially activates the GTPases RHOA, RAC1 and CDC42. Plays a role in axon guidance regulating ephrin-induced growth cone collapse and dendritic spine morphogenesis. Upon activation by ephrin through EPHA4, the GEF activity switches toward RHOA resulting in its activation. Activated RHOA promotes cone retraction at the expense of RAC1- and CDC42-stimulated growth cone extension. This Rattus norvegicus (Rat) protein is Ephexin-1 (Ngef).